Here is a 98-residue protein sequence, read N- to C-terminus: Tan_12Cys (98 aa).

Residues 1–21 (MNLKVLFLLAMVLVTLCLGED) form the signal peptide. A propeptide spanning residues 22–28 (RVTDRRK) is cleaved from the precursor.

Belongs to the teretoxin C (TC) superfamily. Post-translationally, contains 6 disulfide bonds. Expressed by the venom duct.

It localises to the secreted. This Terebra anilis (Auger snail) protein is Tan_12Cys.